The primary structure comprises 484 residues: GTPase Obg (484 aa).

Residues 7-164 (PRFVDRVVIH…RDLTLELKTV (158 aa)) enclose the Obg domain. Residues 21 to 43 (SGGNGCASVHREKFKPLGGPDGG) are disordered. Positions 165–345 (ADVGLVGFPS…LIFGLSQMIS (181 aa)) constitute an OBG-type G domain. GTP-binding positions include 171–178 (GFPSAGKS), 196–200 (FTTLV), 217–220 (DVPG), 297–300 (NKID), and 326–328 (STA). Mg(2+)-binding residues include Ser-178 and Thr-198. The OCT domain maps to 363–441 (PIPVDDSGFT…IGEMTFDWEP (79 aa)). The segment at 439-484 (WEPQTPAGEPVAMSGRGTDPRLDSNKRVGAAERKAARSRRREHGDG) is disordered. Basic and acidic residues predominate over residues 456–473 (TDPRLDSNKRVGAAERKA). A compositionally biased stretch (basic residues) spans 474–484 (ARSRRREHGDG).

It belongs to the TRAFAC class OBG-HflX-like GTPase superfamily. OBG GTPase family. As to quaternary structure, monomer. Mg(2+) is required as a cofactor.

Its subcellular location is the cytoplasm. In terms of biological role, an essential GTPase which binds GTP, GDP and possibly (p)ppGpp with moderate affinity, with high nucleotide exchange rates and a fairly low GTP hydrolysis rate. Plays a role in control of the cell cycle, stress response, ribosome biogenesis and in those bacteria that undergo differentiation, in morphogenesis control. The chain is GTPase Obg from Mycobacterium tuberculosis (strain CDC 1551 / Oshkosh).